A 27-amino-acid chain; its full sequence is Ferric reductase B (27 aa).

In terms of assembly, homodimer. The cofactor is FAD.

It catalyses the reaction 2 a Fe(II)-siderophore + NAD(+) + H(+) = 2 a Fe(III)-siderophore + NADH. Reductase activity that acts on Fe(3+)-chelates and uses both NADH and NADPH as electron donors. May play a role in iron uptake. The chain is Ferric reductase B (ferB) from Paracoccus denitrificans.